The primary structure comprises 144 residues: Large ribosomal subunit protein uL15 (144 aa).

The disordered stretch occupies residues 1–54; that stretch reads MRLNTLSPAEGSKKAGKRLGRGIGSGLGKTGGRGHKGQKSRSGGGVRRGFEGGQ. Residues 21–31 are compositionally biased toward gly residues; that stretch reads RGIGSGLGKTG.

It belongs to the universal ribosomal protein uL15 family. Part of the 50S ribosomal subunit.

Functionally, binds to the 23S rRNA. This chain is Large ribosomal subunit protein uL15, found in Salmonella enteritidis PT4 (strain P125109).